A 536-amino-acid polypeptide reads, in one-letter code: Formate--tetrahydrofolate ligase (536 aa).

51 to 58 provides a ligand contact to ATP; sequence TPAGEGKT.

It belongs to the formate--tetrahydrofolate ligase family.

It carries out the reaction (6S)-5,6,7,8-tetrahydrofolate + formate + ATP = (6R)-10-formyltetrahydrofolate + ADP + phosphate. It participates in one-carbon metabolism; tetrahydrofolate interconversion. The polypeptide is Formate--tetrahydrofolate ligase (Thermoplasma acidophilum (strain ATCC 25905 / DSM 1728 / JCM 9062 / NBRC 15155 / AMRC-C165)).